The following is a 129-amino-acid chain: Glycine cleavage system H protein (129 aa).

One can recognise a Lipoyl-binding domain in the interval 24–106 (SYTVGISEHA…YGDGWFFRIM (83 aa)). N6-lipoyllysine is present on Lys65.

This sequence belongs to the GcvH family. The glycine cleavage system is composed of four proteins: P, T, L and H. (R)-lipoate serves as cofactor.

Functionally, the glycine cleavage system catalyzes the degradation of glycine. The H protein shuttles the methylamine group of glycine from the P protein to the T protein. The sequence is that of Glycine cleavage system H protein from Shewanella loihica (strain ATCC BAA-1088 / PV-4).